Reading from the N-terminus, the 275-residue chain is Large ribosomal subunit protein uL2 (275 aa).

Disordered stretches follow at residues 38–59 (KKHAGRNNHGHITTRHRGGGHK) and 222–275 (GSAM…RKQK). Basic residues-rich tracts occupy residues 39 to 59 (KHAGRNNHGHITTRHRGGGHK) and 254 to 275 (MGKKTRHNPRTQRFIVRTRKQK).

Belongs to the universal ribosomal protein uL2 family. Part of the 50S ribosomal subunit. Forms a bridge to the 30S subunit in the 70S ribosome.

In terms of biological role, one of the primary rRNA binding proteins. Required for association of the 30S and 50S subunits to form the 70S ribosome, for tRNA binding and peptide bond formation. It has been suggested to have peptidyltransferase activity; this is somewhat controversial. Makes several contacts with the 16S rRNA in the 70S ribosome. This is Large ribosomal subunit protein uL2 from Herpetosiphon aurantiacus (strain ATCC 23779 / DSM 785 / 114-95).